The following is a 380-amino-acid chain: Cytosolic acyl coenzyme A thioester hydrolase (380 aa).

The HotDog ACOT-type 1 domain occupies 50 to 168; the sequence is PCGACITGRI…TLWYVPLSLK (119 aa). Asn-66 is an active-site residue. An N6-acetyllysine mark is found at Lys-168 and Lys-198. Residues 224 to 338 enclose the HotDog ACOT-type 2 domain; it reads SYSQSSLIHL…FFTYVSLSQE (115 aa). Asp-255 is an active-site residue. An N6-acetyllysine modification is found at Lys-283. The interval 350-380 is disordered; it reads ETEDEKKRFEEGKGRYLQMKAKRQGHAEPQP. Residues 353 to 363 are compositionally biased toward basic and acidic residues; that stretch reads DEKKRFEEGKG.

As to quaternary structure, homohexamer. Isoform 4 is expressed exclusively in brain.

The protein localises to the cytoplasm. The protein resides in the cytosol. It localises to the mitochondrion. The enzyme catalyses hexadecanoyl-CoA + H2O = hexadecanoate + CoA + H(+). It catalyses the reaction octanoyl-CoA + H2O = octanoate + CoA + H(+). It carries out the reaction dodecanoyl-CoA + H2O = dodecanoate + CoA + H(+). The catalysed reaction is (9Z)-octadecenoyl-CoA + H2O = (9Z)-octadecenoate + CoA + H(+). The enzyme catalyses tetradecanoyl-CoA + H2O = tetradecanoate + CoA + H(+). It catalyses the reaction decanoyl-CoA + H2O = decanoate + CoA + H(+). It carries out the reaction octadecanoyl-CoA + H2O = octadecanoate + CoA + H(+). The protein operates within lipid metabolism; fatty acid metabolism. Its function is as follows. Catalyzes the hydrolysis of acyl-CoAs into free fatty acids and coenzyme A (CoASH), regulating their respective intracellular levels. Preferentially hydrolyzes palmitoyl-CoA, but has a broad specificity acting on other fatty acyl-CoAs with chain-lengths of C8-C18. May play an important physiological function in brain. The chain is Cytosolic acyl coenzyme A thioester hydrolase (ACOT7) from Homo sapiens (Human).